The primary structure comprises 682 residues: Potassium-transporting ATPase ATP-binding subunit (682 aa).

The next 4 membrane-spanning stretches (helical) occupy residues 35 to 55 (VMFVVWLGSVVTTLLAVAMAA), 62 to 82 (TGFTVAISVWLWFTVLFANFA), 219 to 239 (IALTILLLALTIVLLLATVTL), and 254 to 274 (VLVALLVCLIPTTIGGLLSAI). Aspartate 307 acts as the 4-aspartylphosphate intermediate in catalysis. ATP is bound by residues aspartate 344, glutamate 348, 377 to 384 (FSAQTRMS), and lysine 395. Mg(2+) contacts are provided by aspartate 518 and aspartate 522. 3 consecutive transmembrane segments (helical) span residues 577 to 597 (TFSIANDVAKYFAILPAAFAA), 616 to 636 (AILSAVIFNALVIVFLIPLAL), and 656 to 676 (IYGVGGLLVPFLGIKLIDMLL).

This sequence belongs to the cation transport ATPase (P-type) (TC 3.A.3) family. Type IA subfamily. In terms of assembly, the system is composed of three essential subunits: KdpA, KdpB and KdpC.

Its subcellular location is the cell inner membrane. The enzyme catalyses K(+)(out) + ATP + H2O = K(+)(in) + ADP + phosphate + H(+). Part of the high-affinity ATP-driven potassium transport (or Kdp) system, which catalyzes the hydrolysis of ATP coupled with the electrogenic transport of potassium into the cytoplasm. This subunit is responsible for energy coupling to the transport system and for the release of the potassium ions to the cytoplasm. The polypeptide is Potassium-transporting ATPase ATP-binding subunit (Erwinia tasmaniensis (strain DSM 17950 / CFBP 7177 / CIP 109463 / NCPPB 4357 / Et1/99)).